Consider the following 638-residue polypeptide: Neuroendocrine convertase 2 (638 aa).

The signal sequence occupies residues 1–25; sequence MKGGCVSQWKAAAGLLFCVTVFASA. Residues 26–109 constitute a propeptide that is removed on maturation; sequence ERPVFTNHFL…QQEGFDRKKR (84 aa). Residues 129–453 enclose the Peptidase S8 domain; sequence QWYLINTGQA…YGVLDAGAMV (325 aa). Active-site charge relay system residues include Asp-167 and His-208. 2 disulfide bridges follow: Cys-225–Cys-376 and Cys-317–Cys-347. Asn-375 is a glycosylation site (N-linked (GlcNAc...) asparagine). Ser-384 (charge relay system) is an active-site residue. Residues 461–597 form the P/Homo B domain; it reads TVPERFHCVG…TLMLHGSQSA (137 aa). The cysteines at positions 468 and 494 are disulfide-linked. Asn-514 and Asn-524 each carry an N-linked (GlcNAc...) asparagine glycan.

Belongs to the peptidase S8 family. Furin subfamily.

Its subcellular location is the cytoplasmic vesicle. The protein resides in the secretory vesicle. The protein localises to the secreted. It catalyses the reaction Release of protein hormones and neuropeptides from their precursors, generally by hydrolysis of -Lys-Arg-|- bonds.. In terms of biological role, serine endopeptidase which is involved in the processing of hormone and other protein precursors at sites comprised of pairs of basic amino acid residues. Responsible for the release of glucagon from proglucagon in pancreatic A cells. The sequence is that of Neuroendocrine convertase 2 (PCSK2) from Sus scrofa (Pig).